The sequence spans 954 residues: Zinc finger protein 618 (954 aa).

N-acetylmethionine is present on methionine 1. Low complexity predominate over residues methionine 1 to glycine 19. The interval methionine 1–threonine 56 is disordered. Glycyl lysine isopeptide (Lys-Gly) (interchain with G-Cter in SUMO2) cross-links involve residues lysine 63 and lysine 81. C2H2-type zinc fingers lie at residues tyrosine 147–histidine 169 and tyrosine 188–histidine 210. Lysine 239 is covalently cross-linked (Glycyl lysine isopeptide (Lys-Gly) (interchain with G-Cter in SUMO2)). Residues tyrosine 256–histidine 278 form a C2H2-type 3 zinc finger. Disordered regions lie at residues serine 282–serine 307 and arginine 337–glutamate 390. A compositionally biased stretch (polar residues) spans proline 340 to serine 357. Residues phenylalanine 366–glutamate 380 are compositionally biased toward basic and acidic residues. The C2H2-type 4 zinc-finger motif lies at tyrosine 392–histidine 414. The interval asparagine 421–glutamate 463 is disordered. Lysine 437 is covalently cross-linked (Glycyl lysine isopeptide (Lys-Gly) (interchain with G-Cter in SUMO2)). Over residues alanine 442–serine 459 the composition is skewed to polar residues.

The protein belongs to the krueppel C2H2-type zinc-finger protein family. In terms of assembly, interacts with UHRF2.

Its subcellular location is the nucleus. The protein resides in the chromosome. In terms of biological role, regulates UHRF2 function as a specific 5-hydroxymethylcytosine (5hmC) reader by regulating its chromatin localization. The chain is Zinc finger protein 618 (ZNF618) from Homo sapiens (Human).